Consider the following 231-residue polypeptide: 7-cyano-7-deazaguanine synthase (231 aa).

An ATP-binding site is contributed by 8 to 18 (FSGGQDSTTCL). Zn(2+) contacts are provided by Cys-188, Cys-197, Cys-200, and Cys-203.

It belongs to the QueC family. The cofactor is Zn(2+).

The enzyme catalyses 7-carboxy-7-deazaguanine + NH4(+) + ATP = 7-cyano-7-deazaguanine + ADP + phosphate + H2O + H(+). It functions in the pathway purine metabolism; 7-cyano-7-deazaguanine biosynthesis. In terms of biological role, catalyzes the ATP-dependent conversion of 7-carboxy-7-deazaguanine (CDG) to 7-cyano-7-deazaguanine (preQ(0)). The polypeptide is 7-cyano-7-deazaguanine synthase (Escherichia coli (strain SE11)).